The primary structure comprises 352 residues: MSLTVDDFDFPLPPELIAQHPAAERRGSRLLHVCGEQLVDRRFADLPTLLKAGDLLVFNDTRVIKARFFGQKDTGGQVEIMLERIVDATHAICQVRASKAPKAGSTMRLADAFTVKMTGRAGADGDFFALELAEPGDFWELSERYGKLPLPPYIEHPAEGTDETRYQTVYAREPGAVAAPTAGLHFDEDMLATLQAQGINTAFLTLHVGAGTYRPMRVEKIADHRMHSERFEIPPATADAITTTRAAGGQVIAVGTTSLRALESAGNEDGTVQVGGAETSIFITPGYRFQVVDRLITNFHLPKSTLLMLVSAFAGYDHIRAAYAHAVAERYRFFSYGDAMLLERTGQPSDAI.

The protein belongs to the QueA family. Monomer.

It is found in the cytoplasm. The catalysed reaction is 7-aminomethyl-7-carbaguanosine(34) in tRNA + S-adenosyl-L-methionine = epoxyqueuosine(34) in tRNA + adenine + L-methionine + 2 H(+). Its pathway is tRNA modification; tRNA-queuosine biosynthesis. Functionally, transfers and isomerizes the ribose moiety from AdoMet to the 7-aminomethyl group of 7-deazaguanine (preQ1-tRNA) to give epoxyqueuosine (oQ-tRNA). The chain is S-adenosylmethionine:tRNA ribosyltransferase-isomerase from Dechloromonas aromatica (strain RCB).